The chain runs to 223 residues: DNA mismatch repair protein MutH (223 aa).

Belongs to the MutH family.

The protein resides in the cytoplasm. Its function is as follows. Sequence-specific endonuclease that cleaves unmethylated GATC sequences. It is involved in DNA mismatch repair. The polypeptide is DNA mismatch repair protein MutH (Shewanella sp. (strain MR-4)).